A 384-amino-acid polypeptide reads, in one-letter code: Lipoyl synthase 2, chloroplastic (384 aa).

The N-terminal 48 residues, 1–48 (MAAYCSRVYHHHPVSPSTMQGSLARPSIHAGSASLTFRARPNSVSIVR), are a transit peptide targeting the chloroplast. The [4Fe-4S] cluster site is built by C108, C113, C119, C145, C149, C152, and S360. Residues 128–349 (GDGDGIATAT…KEYGESLGFL (222 aa)) enclose the Radical SAM core domain.

This sequence belongs to the radical SAM superfamily. Lipoyl synthase family. Requires [4Fe-4S] cluster as cofactor.

Its subcellular location is the plastid. It is found in the chloroplast. It catalyses the reaction [[Fe-S] cluster scaffold protein carrying a second [4Fe-4S](2+) cluster] + N(6)-octanoyl-L-lysyl-[protein] + 2 oxidized [2Fe-2S]-[ferredoxin] + 2 S-adenosyl-L-methionine + 4 H(+) = [[Fe-S] cluster scaffold protein] + N(6)-[(R)-dihydrolipoyl]-L-lysyl-[protein] + 4 Fe(3+) + 2 hydrogen sulfide + 2 5'-deoxyadenosine + 2 L-methionine + 2 reduced [2Fe-2S]-[ferredoxin]. It participates in protein modification; protein lipoylation via endogenous pathway; protein N(6)-(lipoyl)lysine from octanoyl-[acyl-carrier-protein]: step 2/2. Functionally, catalyzes the radical-mediated insertion of two sulfur atoms into the C-6 and C-8 positions of the octanoyl moiety bound to the lipoyl domains of lipoate-dependent enzymes, thereby converting the octanoylated domains into lipoylated derivatives. This is Lipoyl synthase 2, chloroplastic from Oryza sativa subsp. indica (Rice).